Consider the following 605-residue polypeptide: Zinc metalloproteinase nas-34 (605 aa).

The first 19 residues, 1 to 19, serve as a signal peptide directing secretion; the sequence is MVSYWPVLIVLCLLPICHA. The propeptide occupies 20–124; the sequence is KSYFADFVNG…EFLYAIRGKR (105 aa). The Peptidase M12A domain maps to 124-322; that stretch reads RSMTSFLSER…VKRINFAYCN (199 aa). 2 cysteine pairs are disulfide-bonded: Cys165-Cys321 and Cys191-Cys211. A Zn(2+)-binding site is contributed by His219. Residue Glu220 is part of the active site. Residues His223 and His229 each coordinate Zn(2+). In terms of domain architecture, EGF-like spans 317–357; that stretch reads NFAYCNSTCSNYLDCQNGGYINPNDCNNCKCPPGFGGQLCD. An N-linked (GlcNAc...) asparagine glycan is attached at Asn322. 4 disulfides stabilise this stretch: Cys325/Cys345, Cys347/Cys356, Cys366/Cys388, and Cys415/Cys436. A CUB domain is found at 366 to 469; the sequence is CGAGDITATS…ARFSLNYRYD (104 aa). The disordered stretch occupies residues 479 to 526; the sequence is TTTSTTTTTAPITVPTVSPTTTTTRQTTTTARTSTTTTTTQAPPTTTT. One can recognise a TSP type-1 domain in the interval 525 to 566; the sequence is TTSTSQCASWSACSAQCGGCGTQSRRCGTYVETVYCNTNPCT. Disulfide bonds link Cys531-Cys551, Cys537-Cys560, and Cys541-Cys565.

Requires Zn(2+) as cofactor. Expressed in hypodermal cells. First expressed in the dorsal and lateral surface area of the middle and posterior region of embryos. At later stages, it localizes to lateral surface regions, probably corresponding to hypodermal seam cells. In L1 larvae, it is expressed in seam cells and in a few cells anterior to the nerve ring.

It localises to the secreted. Functionally, metalloprotease. Required for normal hatching and migration of neuroblasts. May act by degrading eggshell proteins at hatching. The polypeptide is Zinc metalloproteinase nas-34 (hch-1) (Caenorhabditis elegans).